A 360-amino-acid polypeptide reads, in one-letter code: Phospho-N-acetylmuramoyl-pentapeptide-transferase (360 aa).

10 helical membrane passes run 27 to 47 (VMAV…LIRF), 71 to 91 (TPTM…LLWA), 98 to 118 (VWIV…DDYL), 142 to 162 (LVLA…TFVM), 168 to 188 (YMPY…VGSS), 199 to 219 (GLAI…AYLT), 236 to 256 (ASEL…FLWF), 263 to 283 (VFMG…IAVL), 288 to 308 (ILLV…ILQV), and 338 to 358 (VIVR…VTLK).

It belongs to the glycosyltransferase 4 family. MraY subfamily. The cofactor is Mg(2+).

It is found in the cell inner membrane. The catalysed reaction is UDP-N-acetyl-alpha-D-muramoyl-L-alanyl-gamma-D-glutamyl-meso-2,6-diaminopimeloyl-D-alanyl-D-alanine + di-trans,octa-cis-undecaprenyl phosphate = di-trans,octa-cis-undecaprenyl diphospho-N-acetyl-alpha-D-muramoyl-L-alanyl-D-glutamyl-meso-2,6-diaminopimeloyl-D-alanyl-D-alanine + UMP. Its pathway is cell wall biogenesis; peptidoglycan biosynthesis. In terms of biological role, catalyzes the initial step of the lipid cycle reactions in the biosynthesis of the cell wall peptidoglycan: transfers peptidoglycan precursor phospho-MurNAc-pentapeptide from UDP-MurNAc-pentapeptide onto the lipid carrier undecaprenyl phosphate, yielding undecaprenyl-pyrophosphoryl-MurNAc-pentapeptide, known as lipid I. This is Phospho-N-acetylmuramoyl-pentapeptide-transferase from Psychromonas ingrahamii (strain DSM 17664 / CCUG 51855 / 37).